We begin with the raw amino-acid sequence, 288 residues long: Acetyl-coenzyme A carboxylase carboxyl transferase subunit beta (288 aa).

One can recognise a CoA carboxyltransferase N-terminal domain in the interval 34–288 (LFAKCPACKH…HLVAFHGGVS (255 aa)). Zn(2+) contacts are provided by C38, C41, C56, and C59. The C4-type zinc finger occupies 38–59 (CPACKHMIYQKDLGPAKICPTC).

It belongs to the AccD/PCCB family. Acetyl-CoA carboxylase is a heterohexamer composed of biotin carboxyl carrier protein (AccB), biotin carboxylase (AccC) and two subunits each of ACCase subunit alpha (AccA) and ACCase subunit beta (AccD). Zn(2+) is required as a cofactor.

The protein localises to the cytoplasm. It catalyses the reaction N(6)-carboxybiotinyl-L-lysyl-[protein] + acetyl-CoA = N(6)-biotinyl-L-lysyl-[protein] + malonyl-CoA. It participates in lipid metabolism; malonyl-CoA biosynthesis; malonyl-CoA from acetyl-CoA: step 1/1. In terms of biological role, component of the acetyl coenzyme A carboxylase (ACC) complex. Biotin carboxylase (BC) catalyzes the carboxylation of biotin on its carrier protein (BCCP) and then the CO(2) group is transferred by the transcarboxylase to acetyl-CoA to form malonyl-CoA. The polypeptide is Acetyl-coenzyme A carboxylase carboxyl transferase subunit beta (Streptococcus equi subsp. zooepidemicus (strain H70)).